The primary structure comprises 118 residues: Large ribosomal subunit protein bL17 (118 aa).

This sequence belongs to the bacterial ribosomal protein bL17 family. As to quaternary structure, part of the 50S ribosomal subunit. Contacts protein L32.

This Onion yellows phytoplasma (strain OY-M) protein is Large ribosomal subunit protein bL17.